Reading from the N-terminus, the 122-residue chain is Large ribosomal subunit protein uL14 (122 aa).

It belongs to the universal ribosomal protein uL14 family. In terms of assembly, part of the 50S ribosomal subunit. Forms a cluster with proteins L3 and L19. In the 70S ribosome, L14 and L19 interact and together make contacts with the 16S rRNA in bridges B5 and B8.

Functionally, binds to 23S rRNA. Forms part of two intersubunit bridges in the 70S ribosome. The chain is Large ribosomal subunit protein uL14 from Psychromonas ingrahamii (strain DSM 17664 / CCUG 51855 / 37).